A 189-amino-acid polypeptide reads, in one-letter code: Protein jagunal homolog (189 aa).

Residues 1 to 34 (MSSRGVRAAGTDGTDFQNRQRVAQHYQESAQYKS) lie on the Cytoplasmic side of the membrane. A helical transmembrane segment spans residues 35–55 (ILKWFFVPHFLILVFMWLKVG). Residues 56–78 (SELLRTNFGWKNAFFDRLDMPSA) lie on the Lumenal side of the membrane. A helical membrane pass occupies residues 79–99 (YPWEYVWCFSFIPIVLAIYSF). Residues 100–105 (QRNKLK) lie on the Cytoplasmic side of the membrane. The chain crosses the membrane as a helical span at residues 106-126 (ILHYAYYAEFVVGIFPCMIGL). Residues 127 to 150 (GGQLPELMEYAQDMEGSNTPTFKG) are Lumenal-facing. Residues 151-171 (IFPMVIIWYIFFAVALQIHGF) traverse the membrane as a helical segment. The Cytoplasmic segment spans residues 172–189 (SMYFMHHLAAAWAPVKRD).

It belongs to the jagunal family.

It is found in the endoplasmic reticulum membrane. The chain is Protein jagunal homolog from Caenorhabditis elegans.